The primary structure comprises 386 residues: MHLHEYQAKDLLTSYAIPMPPYRVASSVEEGRHTLNELGINAGVVKVQVHAGGRGKNGGVIVAKSPEEILAAVDQLLHMRFVSNQTSGEALPVEKVLITPLVNIAAEYYLAVIMDRKNRCPTIMLSKAGGVDIEEVAQKYPDQQLTISLTPFARLYNYQLRQMIKFMGWEGDTGKQGVQMIKNLVQCFYDNDASLLEINPLVRTQEGDLLVLDAKVTIDDNALYRHPKLEVLYDPSQENVRDVLAKQIGLSYIALDGNIGCLVNGAGLAMSTLDILKIHGGSAANFLDVGGSATEQQIQEAVSLVLSDENVEVLFINIFGGIMDCSAVASGLVAVMQTRENLIPTVVRLEGTNVELGKEIVQCSGIPCKFTDSLNTGAQLAVALSK.

In terms of domain architecture, ATP-grasp spans 9–244; it reads KDLLTSYAIP…PSQENVRDVL (236 aa). Residues Lys46, 53-55, Val102, and Glu107 each bind ATP; that span reads GRG. Positions 199 and 213 each coordinate Mg(2+). Substrate-binding positions include Asn264 and 321–323; that span reads GIM.

The protein belongs to the succinate/malate CoA ligase beta subunit family. Heterotetramer of two alpha and two beta subunits. Requires Mg(2+) as cofactor.

It catalyses the reaction succinate + ATP + CoA = succinyl-CoA + ADP + phosphate. It carries out the reaction GTP + succinate + CoA = succinyl-CoA + GDP + phosphate. It participates in carbohydrate metabolism; tricarboxylic acid cycle; succinate from succinyl-CoA (ligase route): step 1/1. Functionally, succinyl-CoA synthetase functions in the citric acid cycle (TCA), coupling the hydrolysis of succinyl-CoA to the synthesis of either ATP or GTP and thus represents the only step of substrate-level phosphorylation in the TCA. The beta subunit provides nucleotide specificity of the enzyme and binds the substrate succinate, while the binding sites for coenzyme A and phosphate are found in the alpha subunit. This chain is Succinate--CoA ligase [ADP-forming] subunit beta, found in Chlamydia abortus (strain DSM 27085 / S26/3) (Chlamydophila abortus).